Here is a 218-residue protein sequence, read N- to C-terminus: Thiopurine S-methyltransferase (218 aa).

S-adenosyl-L-methionine contacts are provided by tryptophan 10, leucine 45, glutamate 66, and arginine 123.

The protein belongs to the class I-like SAM-binding methyltransferase superfamily. TPMT family.

The protein resides in the cytoplasm. The catalysed reaction is S-adenosyl-L-methionine + a thiopurine = S-adenosyl-L-homocysteine + a thiopurine S-methylether.. In Pseudomonas paraeruginosa (strain DSM 24068 / PA7) (Pseudomonas aeruginosa (strain PA7)), this protein is Thiopurine S-methyltransferase.